We begin with the raw amino-acid sequence, 500 residues long: NAD(P)H-quinone oxidoreductase chain 4, chloroplastic (500 aa).

A run of 14 helical transmembrane segments spans residues 4–24, 37–57, 80–100, 113–130, 134–154, 167–187, 208–228, 242–262, 272–292, 305–325, 330–350, 386–406, 416–436, and 462–482; these read FYWL…IALL, ICIC…HFQL, LGID…TTLA, LFHF…GLFS, LLLF…LLSM, FILY…GMGL, ALEI…SPII, HYST…YGLV, AHSI…IYAA, IAYS…SITD, GAIL…FLAG, LALP…GIIT, ILIT…SLSM, and IFIL…PDFV.

Belongs to the complex I subunit 4 family.

The protein resides in the plastid. It is found in the chloroplast thylakoid membrane. It carries out the reaction a plastoquinone + NADH + (n+1) H(+)(in) = a plastoquinol + NAD(+) + n H(+)(out). The enzyme catalyses a plastoquinone + NADPH + (n+1) H(+)(in) = a plastoquinol + NADP(+) + n H(+)(out). This Nuphar advena (Common spatterdock) protein is NAD(P)H-quinone oxidoreductase chain 4, chloroplastic.